We begin with the raw amino-acid sequence, 994 residues long: Regulator of telomere elongation helicase 1 homolog (994 aa).

In terms of domain architecture, Helicase ATP-binding spans 15-300; the sequence is PKLSVKFPFE…EETARSEADA (286 aa). 50 to 57 lines the ATP pocket; that stretch reads SPTGTGKT. 4 residues coordinate [4Fe-4S] cluster: Cys142, Cys160, Cys169, and Cys208. The DEAH box signature appears at 251 to 254; the sequence is DEAH. Positions 876–895 are disordered; that stretch reads FKIETPGPSTSTLTQKSEPP. Residues 882–892 show a composition bias toward polar residues; sequence GPSTSTLTQKS.

Belongs to the helicase family. RAD3/XPD subfamily.

It localises to the nucleus. The enzyme catalyses ATP + H2O = ADP + phosphate + H(+). A probable ATP-dependent DNA helicase implicated in DNA repair and the maintenance of genomic stability. Acts as an anti-recombinase to counteract toxic recombination and limit crossover during meiosis. Regulates meiotic recombination and crossover homeostasis by physically dissociating strand invasion events and thereby promotes noncrossover repair by meiotic synthesis dependent strand annealing (SDSA) as well as disassembly of D loop recombination intermediates. The sequence is that of Regulator of telomere elongation helicase 1 homolog from Caenorhabditis elegans.